Consider the following 387-residue polypeptide: Major outer membrane protein P.IA (387 aa).

An N-terminal signal peptide occupies residues 1-19 (MRKKLTALVLSALPLAAVA).

This sequence belongs to the Gram-negative porin family. As to quaternary structure, homotrimer.

It localises to the cell outer membrane. Functionally, serves as a slightly cation selective porin. Major antigen on the gonococcal cell surface and it may have pathogenic properties in addition to its porin activity. This Neisseria meningitidis serogroup C protein is Major outer membrane protein P.IA (porA).